The sequence spans 56 residues: Ribosome biogenesis protein Nop10 (56 aa).

This sequence belongs to the NOP10 family.

In terms of biological role, involved in ribosome biogenesis; more specifically in 18S rRNA pseudouridylation and in cleavage of pre-rRNA. The protein is Ribosome biogenesis protein Nop10 of Methanococcoides burtonii (strain DSM 6242 / NBRC 107633 / OCM 468 / ACE-M).